Consider the following 128-residue polypeptide: MALPKDMRLKGHRTFNYIHKNSIKYHGKLMTFKVARSNPEILLSHNHTNASNNFRAAIAISKKVSKKAVDRNKIRRILQEWLITNIPKINSHKPYWLLVNLKFGDFCNDKNKLLEEFQNLMFKSRLIK.

Belongs to the RnpA family. Consists of a catalytic RNA component (M1 or rnpB) and a protein subunit.

The catalysed reaction is Endonucleolytic cleavage of RNA, removing 5'-extranucleotides from tRNA precursor.. In terms of biological role, RNaseP catalyzes the removal of the 5'-leader sequence from pre-tRNA to produce the mature 5'-terminus. It can also cleave other RNA substrates such as 4.5S RNA. The protein component plays an auxiliary but essential role in vivo by binding to the 5'-leader sequence and broadening the substrate specificity of the ribozyme. This Prochlorococcus marinus (strain MIT 9312) protein is Ribonuclease P protein component.